We begin with the raw amino-acid sequence, 139 residues long: Small ribosomal subunit protein uS19 (139 aa).

The protein belongs to the universal ribosomal protein uS19 family.

Its function is as follows. Protein S19 forms a complex with S13 that binds strongly to the 16S ribosomal RNA. In Ignicoccus hospitalis (strain KIN4/I / DSM 18386 / JCM 14125), this protein is Small ribosomal subunit protein uS19.